Here is a 1071-residue protein sequence, read N- to C-terminus: Serine/threonine-protein phosphatase 6 regulatory ankyrin repeat subunit C (1071 aa).

28 ANK repeats span residues 7 to 36 (SDQP…EVNA), 40 to 69 (ERRT…NVNA), 73 to 102 (VWLT…DVTA), 106 to 135 (YWQT…SLNM), 139 to 168 (TGRA…NLSA), 172 to 201 (KDRQ…DKSC), 205 to 234 (RGYT…EIDE), 238 to 267 (FGNT…NVNQ), 271 to 301 (RGYT…DVNM), 305 to 334 (EGKS…EIDC), 338 to 367 (YGNT…DTAR), 371 to 400 (HGMF…LYSI), 422 to 451 (FGRT…DMNK), 455 to 484 (FGRT…EVNE), 488 to 539 (SGCT…DPCL), 543 to 573 (KGYS…TLGD), 578 to 607 (GSIS…CVDV), 611 to 640 (VGRS…SCLL), 645 to 674 (SKWG…GADL), 681 to 710 (EGQT…CPDM), 714 to 743 (RGRT…SVLS), 747 to 776 (QGRS…HSQP), 784 to 814 (HGYT…SIQE), 816 to 845 (NPFT…CNSL), 852 to 881 (KGRT…DIDA), 885 to 915 (SGRS…DLSL), 919 to 951 (NKNT…LINA), and 955 to 984 (MLQM…TVLA).

In terms of assembly, protein phosphatase 6 (PP6) holoenzyme is proposed to be a heterotrimeric complex formed by the catalytic subunit, a SAPS domain-containing subunit (PP6R) and an ankyrin repeat-domain containing regulatory subunit (ARS).

Functionally, putative regulatory subunit of protein phosphatase 6 (PP6) that may be involved in the recognition of phosphoprotein substrates. The sequence is that of Serine/threonine-protein phosphatase 6 regulatory ankyrin repeat subunit C (ankrd52) from Danio rerio (Zebrafish).